The primary structure comprises 474 residues: Bifunctional ribulose 5-phosphate reductase/CDP-ribitol pyrophosphorylase Bcs1 (474 aa).

The ribitol-5-phosphate cytidylyltransferase stretch occupies residues 1 to 238 (MNKNKNIGII…DKLFQSRSHF (238 aa)). Residues 250 to 474 (YDMKDQVLVV…ITNILADLYK (225 aa)) form a ribulose-5-phosphate reductase region.

In the N-terminal section; belongs to the IspD/TarI cytidylyltransferase family. The protein in the C-terminal section; belongs to the short-chain dehydrogenases/reductases (SDR) family. Monomer.

It carries out the reaction D-ribitol 5-phosphate + CTP + H(+) = CDP-L-ribitol + diphosphate. The enzyme catalyses D-ribitol 5-phosphate + NADP(+) = D-ribulose 5-phosphate + NADPH + H(+). It participates in capsule biogenesis; capsule polysaccharide biosynthesis. In terms of biological role, catalyzes the NADPH-dependent reduction of D-ribulose 5-phosphate to D-ribitol 5-phosphate and the further reaction of D-ribitol 5-phosphate with CTP to form CDP-ribitol. This chain is Bifunctional ribulose 5-phosphate reductase/CDP-ribitol pyrophosphorylase Bcs1, found in Haemophilus influenzae.